The primary structure comprises 89 residues: Microcin N (89 aa).

The N-terminal stretch at 1-15 (MRELDREELNCVGGA) is a signal peptide.

This sequence belongs to the class IIa microcin family. In terms of processing, mass spectrometry suggests 3 of the 4 Met residues of the mature peptide are oxidized.

Its subcellular location is the secreted. In terms of biological role, active against E.coli and Salmonella, but not Listeria or Campylobacter. Channel-forming microcin. Probably neutralized by its immunity protein McnI. The chain is Microcin N from Escherichia coli.